We begin with the raw amino-acid sequence, 426 residues long: Trigger factor (426 aa).

Residues 166–249 (GDIVTFDFKG…IIEVKARELP (84 aa)) enclose the PPIase FKBP-type domain.

This sequence belongs to the FKBP-type PPIase family. Tig subfamily.

It is found in the cytoplasm. The enzyme catalyses [protein]-peptidylproline (omega=180) = [protein]-peptidylproline (omega=0). Functionally, involved in protein export. Acts as a chaperone by maintaining the newly synthesized protein in an open conformation. Functions as a peptidyl-prolyl cis-trans isomerase. The protein is Trigger factor of Mesoplasma florum (strain ATCC 33453 / NBRC 100688 / NCTC 11704 / L1) (Acholeplasma florum).